The following is a 142-amino-acid chain: Acetyltransferase SG1711 (142 aa).

The N-acetyltransferase domain maps to 1–142 (MEIRVFRHDD…GKRLIEDQEY (142 aa)).

The protein belongs to the acetyltransferase family. YpeA subfamily.

In Sodalis glossinidius (strain morsitans), this protein is Acetyltransferase SG1711.